The following is a 318-amino-acid chain: Dual specificity protein phosphatase 2 (318 aa).

The 122-residue stretch at 27 to 148 (EAERTLLLDC…FQTYCPDLCS (122 aa)) folds into the Rhodanese domain. In terms of domain architecture, Tyrosine-protein phosphatase spans 176 to 317 (GPVEILPYLY…LLQLETQVLC (142 aa)). Cysteine 261 (phosphocysteine intermediate) is an active-site residue.

This sequence belongs to the protein-tyrosine phosphatase family. Non-receptor class dual specificity subfamily. As to quaternary structure, interacts with MAPK14; this interaction does not lead to catalytic activation of DUSP2 and dephosphrylation of MAPK14. As to expression, in hematopoietic tissues such as spleen and thymus.

Its subcellular location is the nucleus. It catalyses the reaction O-phospho-L-tyrosyl-[protein] + H2O = L-tyrosyl-[protein] + phosphate. The enzyme catalyses O-phospho-L-threonyl-[protein] + H2O = L-threonyl-[protein] + phosphate. Its function is as follows. Dephosphorylates both phosphorylated Thr and Tyr residues in MAPK1, and dephosphorylation of phosphotyrosine is slightly faster than that of phosphothreonine. Can dephosphorylate MAPK1. This chain is Dual specificity protein phosphatase 2, found in Mus musculus (Mouse).